The following is a 572-amino-acid chain: Solute carrier family 22 member 16 (572 aa).

The chain crosses the membrane as a helical span at residues 21-41 (IFLYFICAFQNISCGIHYLAS). N-linked (GlcNAc...) asparagine glycosylation occurs at N57. 5 consecutive transmembrane segments (helical) span residues 156 to 176 (LIQPTFMFGVLLGAVIFGYLS), 183 to 203 (LVLWASSTGVFLFGIAAAFTF), 208 to 228 (FIVARFLLAISGSGYLVVVFV), 244 to 264 (IHLHSFFAFGTMVVALTGYFV), and 268 to 288 (WIYQIVLSSVTVPFVLCCWML). N-linked (GlcNAc...) asparagine glycosylation occurs at N315. 6 helical membrane-spanning segments follow: residues 359–379 (TLILWLIWFTGCLGFYTFSLN), 389–409 (LNLFLMGVVEIPAYVLVCLGM), 416–436 (NILIFSLLSSAVTSGVIMVIP), 441–461 (VWLVVASMAGKFFIGAAFGLI), 476–496 (LAVGSGSTVGRVGSIVAPLCI), and 503–523 (IFMPQLLVGTLALVSGVLTFL). The N-linked (GlcNAc...) asparagine glycan is linked to N559.

This sequence belongs to the major facilitator (TC 2.A.1) superfamily. Organic cation transporter (TC 2.A.1.19) family.

It is found in the cell membrane. It catalyses the reaction (R)-carnitine(in) = (R)-carnitine(out). The catalysed reaction is spermidine(in) = spermidine(out). Facilitative organic cation transporter that mediates the transport of carnitine as well as the polyamine spermidine. Mediates the partially Na(+)-dependent bidirectional transport of carnitine. May mediate L-carnitine secretion from testis epididymal epithelium into the lumen which is involved in the maturation of spermatozoa. The chain is Solute carrier family 22 member 16 (SLC22A16) from Bos taurus (Bovine).